Reading from the N-terminus, the 263-residue chain is Tryptophan synthase alpha chain (263 aa).

Active-site proton acceptor residues include E49 and D60.

This sequence belongs to the TrpA family. In terms of assembly, tetramer of two alpha and two beta chains.

It catalyses the reaction (1S,2R)-1-C-(indol-3-yl)glycerol 3-phosphate + L-serine = D-glyceraldehyde 3-phosphate + L-tryptophan + H2O. It participates in amino-acid biosynthesis; L-tryptophan biosynthesis; L-tryptophan from chorismate: step 5/5. In terms of biological role, the alpha subunit is responsible for the aldol cleavage of indoleglycerol phosphate to indole and glyceraldehyde 3-phosphate. The protein is Tryptophan synthase alpha chain of Jannaschia sp. (strain CCS1).